The chain runs to 775 residues: 1,4-alpha-glucan branching enzyme GlgB (775 aa).

The interval 1–39 (MTSVHDFATATRPATPSAAAQEPAPALPPGLDRNTLDAL) is disordered. The segment covering 8–24 (ATATRPATPSAAAQEPA) has biased composition (low complexity). D454 serves as the catalytic Nucleophile. E507 acts as the Proton donor in catalysis.

This sequence belongs to the glycosyl hydrolase 13 family. GlgB subfamily. In terms of assembly, monomer.

The catalysed reaction is Transfers a segment of a (1-&gt;4)-alpha-D-glucan chain to a primary hydroxy group in a similar glucan chain.. It functions in the pathway glycan biosynthesis; glycogen biosynthesis. Functionally, catalyzes the formation of the alpha-1,6-glucosidic linkages in glycogen by scission of a 1,4-alpha-linked oligosaccharide from growing alpha-1,4-glucan chains and the subsequent attachment of the oligosaccharide to the alpha-1,6 position. This is 1,4-alpha-glucan branching enzyme GlgB from Ralstonia nicotianae (strain ATCC BAA-1114 / GMI1000) (Ralstonia solanacearum).